The primary structure comprises 345 residues: Anthranilate phosphoribosyltransferase (345 aa).

5-phospho-alpha-D-ribose 1-diphosphate is bound by residues Gly-84, 87–88 (GD), Thr-92, 94–97 (NIST), 112–120 (KHGGRSVSS), and Ser-124. Gly-84 provides a ligand contact to anthranilate. Residue Ser-96 participates in Mg(2+) binding. An anthranilate-binding site is contributed by Arg-170. The Mg(2+) site is built by Asp-229 and Glu-230.

The protein belongs to the anthranilate phosphoribosyltransferase family. In terms of assembly, homodimer. Mg(2+) is required as a cofactor.

The enzyme catalyses N-(5-phospho-beta-D-ribosyl)anthranilate + diphosphate = 5-phospho-alpha-D-ribose 1-diphosphate + anthranilate. It functions in the pathway amino-acid biosynthesis; L-tryptophan biosynthesis; L-tryptophan from chorismate: step 2/5. Its function is as follows. Catalyzes the transfer of the phosphoribosyl group of 5-phosphorylribose-1-pyrophosphate (PRPP) to anthranilate to yield N-(5'-phosphoribosyl)-anthranilate (PRA). This chain is Anthranilate phosphoribosyltransferase, found in Herminiimonas arsenicoxydans.